A 568-amino-acid chain; its full sequence is Protein phosphatase 1 regulatory inhibitor subunit 16B (568 aa).

Residues 15–55 (EKVPTLERLRAAQKRRAQQLKKWAQYEQDLLHRKRKHERKR) are a coiled coil. Residue Ser-69 is modified to Phosphoserine. ANK repeat units lie at residues 100–129 (DGLT…NVNA), 133–162 (ELWT…DLLA), 228–257 (QGAT…RVDV), and 261–290 (DGWE…SLSA). Ser-333, Ser-337, and Ser-350 each carry phosphoserine. Residues 373–403 (SAAEDQRTSTYNGDIRETRTDQENKDPNPRL) are disordered. Residues 386–403 (DIRETRTDQENKDPNPRL) are compositionally biased toward basic and acidic residues. Ser-477 carries the phosphoserine modification. A compositionally biased stretch (low complexity) spans 505–517 (SSVARSGESSSEG). Residues 505-527 (SSVARSGESSSEGKAPLIGGRTS) form a disordered region. Residues 531–560 (SNGTSVYYTVTSGDPPLLKFKAPMEEMEEK) form an ANK 5 repeat. Cys-564 carries S-palmitoyl cysteine lipidation. A Cysteine methyl ester modification is found at Cys-565. Cys-565 carries S-farnesyl cysteine lipidation. Residues 566–568 (RIS) constitute a propeptide, removed in mature form.

In terms of assembly, interacts with PPP1CA, PPP1CB and MSN. Interacts (via its fourth ankyrin repeat) with the mature dimeric form of RPSA/LAMR1. Interacts with EEF1A1. Interacts with PTEN. Interacts with ECE1. Post-translationally, phosphorylated by PKA and, after PKA priming, by GSK3B. Phosphorylation by GSK3B reduces its association with PP1C and enhances PP1C activity. Dephosphorylation by its associated PP1C results in enhanced association with PP1C, but reduced PP1C activity.

It localises to the cell membrane. The protein localises to the nucleus. It is found in the cell projection. In terms of biological role, regulator of protein phosphatase 1 (PP1) that acts as a positive regulator of pulmonary endothelial cell (EC) barrier function. Protects the endothelial barrier from lipopolysaccharide (LPS)-induced vascular leakage. Involved in the regulation of the PI3K/AKT signaling pathway. Involved in the regulation of angiogenesis and endothelial cell proliferation through the control of ECE1 dephosphorylation, trafficking and activity. Involved in the regulation of endothelial cell filopodia extension. May be a downstream target for TGF-beta1 signaling cascade in endothelial cells. Involved in PKA-mediated moesin dephosphorylation which is important in EC barrier protection against thrombin stimulation. Promotes the interaction of PPP1CA with RPSA/LAMR1 and in turn facilitates the dephosphorylation of RPSA/LAMR1. Involved in the dephosphorylation of EEF1A1. This is Protein phosphatase 1 regulatory inhibitor subunit 16B (Ppp1r16b) from Mus musculus (Mouse).